Consider the following 108-residue polypeptide: Small ribosomal subunit protein bS18 (108 aa).

Polar residues predominate over residues 1 to 12; it reads MSDITKQPANNI. The segment at 1–33 is disordered; sequence MSDITKQPANNISSDDKKEVAKASAKSSVEGAK.

This sequence belongs to the bacterial ribosomal protein bS18 family. As to quaternary structure, part of the 30S ribosomal subunit. Forms a tight heterodimer with protein bS6.

Binds as a heterodimer with protein bS6 to the central domain of the 16S rRNA, where it helps stabilize the platform of the 30S subunit. This is Small ribosomal subunit protein bS18 from Mycoplasmoides gallisepticum (strain R(low / passage 15 / clone 2)) (Mycoplasma gallisepticum).